Reading from the N-terminus, the 417-residue chain is NADH-quinone oxidoreductase subunit D (417 aa).

It belongs to the complex I 49 kDa subunit family. NDH-1 is composed of 14 different subunits. Subunits NuoB, C, D, E, F, and G constitute the peripheral sector of the complex.

Its subcellular location is the cell inner membrane. It catalyses the reaction a quinone + NADH + 5 H(+)(in) = a quinol + NAD(+) + 4 H(+)(out). NDH-1 shuttles electrons from NADH, via FMN and iron-sulfur (Fe-S) centers, to quinones in the respiratory chain. The immediate electron acceptor for the enzyme in this species is believed to be ubiquinone. Couples the redox reaction to proton translocation (for every two electrons transferred, four hydrogen ions are translocated across the cytoplasmic membrane), and thus conserves the redox energy in a proton gradient. This Cupriavidus necator (strain ATCC 17699 / DSM 428 / KCTC 22496 / NCIMB 10442 / H16 / Stanier 337) (Ralstonia eutropha) protein is NADH-quinone oxidoreductase subunit D.